A 343-amino-acid chain; its full sequence is tRNA N6-adenosine threonylcarbamoyltransferase (343 aa).

Fe cation-binding residues include histidine 111 and histidine 115. Substrate contacts are provided by residues 134-138 (LVSGG), aspartate 167, glycine 180, and asparagine 276. Aspartate 304 contacts Fe cation.

Belongs to the KAE1 / TsaD family. Fe(2+) serves as cofactor.

The protein localises to the cytoplasm. The enzyme catalyses L-threonylcarbamoyladenylate + adenosine(37) in tRNA = N(6)-L-threonylcarbamoyladenosine(37) in tRNA + AMP + H(+). Functionally, required for the formation of a threonylcarbamoyl group on adenosine at position 37 (t(6)A37) in tRNAs that read codons beginning with adenine. Is involved in the transfer of the threonylcarbamoyl moiety of threonylcarbamoyl-AMP (TC-AMP) to the N6 group of A37, together with TsaE and TsaB. TsaD likely plays a direct catalytic role in this reaction. This chain is tRNA N6-adenosine threonylcarbamoyltransferase, found in Hahella chejuensis (strain KCTC 2396).